Reading from the N-terminus, the 532-residue chain is Exopolysaccharide phosphotransferase CpsY (532 aa).

Belongs to the stealth family.

The sequence is that of Exopolysaccharide phosphotransferase CpsY (cpsY) from Mycobacterium bovis (strain ATCC BAA-935 / AF2122/97).